Consider the following 370-residue polypeptide: MSLHQFLLEPITCHAWNRDRTQIALSPNNHEVHIYKKNGSQWVKAHELKEHNGHITGIDWAPKSDRIVTCGADRNAYVWSQKDGVWKPTLVILRINRAATFVKWSPLENKFAVGSGARLISVCYFESENDWWVSKHIKKPIRSTVLSLDWHPNNVLLAAGSCDFKCRVFSAYIKEVDEKPASTPWGSKMPFGQLMSEFGGSGTGGWVHGVSFSASGSRLAWVSHDSTVSVADASKSVQVSTLKTEFLPLLSVSFVSENSVVAAGHDCCPMLFNYDDRGCLTFVSKLDIPKQSIQRNMSAMERFRNMDKRATTEDRNTALETLHQNSITQVSIYEVDKQDCRKFCTTGIDGAMTIWDFKTLESSIQGLRIM.

WD repeat units lie at residues 6–45 (FLLEPITCHAWNRDRTQIALSPNNHEVHIYKKNGSQWVKA), 50–89 (EHNGHITGIDWAPKSDRIVTCGADRNAYVWSQKDGVWKPT), 140–179 (PIRSTVLSLDWHPNNVLLAAGSCDFKCRVFSAYIKEVDEK), 202–241 (GTGGWVHGVSFSASGSRLAWVSHDSTVSVADASKSVQVST), 244–284 (TEFL…TFVS), and 322–365 (LHQN…SSIQ).

Belongs to the WD repeat ARPC1 family. As to quaternary structure, probable component of the Arp2/3 complex in which it may replace ARPC1B. In addition to its role in the cytoplasmic cytoskeleton, the Arp2/3 complex also promotes actin polymerization in the nucleus, thereby regulating gene transcription and repair of damaged DNA.

Its subcellular location is the cytoplasm. It is found in the cytoskeleton. The protein resides in the nucleus. In terms of biological role, probably functions as a component of the Arp2/3 complex which is involved in regulation of actin polymerization and together with an activating nucleation-promoting factor (NPF) mediates the formation of branched actin networks. This chain is Actin-related protein 2/3 complex subunit 1A (ARPC1A), found in Homo sapiens (Human).